The following is a 315-amino-acid chain: tRNA dimethylallyltransferase (315 aa).

13–20 (GPTAVGKT) is an ATP binding site. 15–20 (TAVGKT) serves as a coordination point for substrate. Positions 38–41 (DSMQ) are interaction with substrate tRNA.

The protein belongs to the IPP transferase family. In terms of assembly, monomer. Mg(2+) is required as a cofactor.

The enzyme catalyses adenosine(37) in tRNA + dimethylallyl diphosphate = N(6)-dimethylallyladenosine(37) in tRNA + diphosphate. Its function is as follows. Catalyzes the transfer of a dimethylallyl group onto the adenine at position 37 in tRNAs that read codons beginning with uridine, leading to the formation of N6-(dimethylallyl)adenosine (i(6)A). The protein is tRNA dimethylallyltransferase of Staphylococcus saprophyticus subsp. saprophyticus (strain ATCC 15305 / DSM 20229 / NCIMB 8711 / NCTC 7292 / S-41).